We begin with the raw amino-acid sequence, 81 residues long: UPF0349 protein SE_0633 (81 aa).

The protein belongs to the UPF0349 family.

The polypeptide is UPF0349 protein SE_0633 (Staphylococcus epidermidis (strain ATCC 12228 / FDA PCI 1200)).